A 64-amino-acid polypeptide reads, in one-letter code: Bubble protein (64 aa).

Intrachain disulfides connect cysteine 3–cysteine 30, cysteine 18–cysteine 38, cysteine 28–cysteine 54, and cysteine 49–cysteine 64.

It is found in the secreted. Its function is as follows. May act as a toxin. May recognize a molecule or part of a molecule with a negatively charged surface potential. The chain is Bubble protein from Penicillium brevicompactum.